An 865-amino-acid polypeptide reads, in one-letter code: Serine/threonine-protein kinase greatwall (865 aa).

Met-1 is subject to N-acetylmethionine. Residues 34-821 enclose the Protein kinase domain; the sequence is FTIVKPISRG…MRELKQHPLF (788 aa). Residues 40–48 and Lys-61 contribute to the ATP site; that span reads ISRGAFGKV. Asp-155 functions as the Proton acceptor in the catalytic mechanism. Thr-206 and Thr-221 each carry phosphothreonine. A phosphoserine mark is found at Ser-362 and Ser-442. Thr-508 carries the phosphothreonine modification. 4 positions are modified to phosphoserine: Ser-545, Ser-619, Ser-644, and Ser-655. Residue Thr-708 is modified to Phosphothreonine. At Ser-711 the chain carries Phosphoserine. Thr-727 is modified (phosphothreonine; by CDK1). One can recognise an AGC-kinase C-terminal domain in the interval 822 to 865; that stretch reads SEVDWENLQHQTMPFVPQPDDETDTSYFEARNNAQHLTISGFSL. 2 positions are modified to phosphoserine: Ser-861 and Ser-864.

This sequence belongs to the protein kinase superfamily. AGC Ser/Thr protein kinase family. Phosphorylation at Thr-727 by CDK1 during M phase activates its kinase activity. Maximum phosphorylation occurs in prometaphase.

The protein resides in the cytoplasm. The protein localises to the cytoskeleton. It localises to the microtubule organizing center. Its subcellular location is the centrosome. It is found in the nucleus. It catalyses the reaction L-seryl-[protein] + ATP = O-phospho-L-seryl-[protein] + ADP + H(+). The enzyme catalyses L-threonyl-[protein] + ATP = O-phospho-L-threonyl-[protein] + ADP + H(+). Its function is as follows. Serine/threonine kinase that plays a key role in M phase by acting as a regulator of mitosis entry and maintenance. Acts by promoting the inactivation of protein phosphatase 2A (PP2A) during M phase: does not directly inhibit PP2A but acts by mediating phosphorylation and subsequent activation of ARPP19 and ENSA at 'Ser-62' and 'Ser-67', respectively. ARPP19 and ENSA are phosphatase inhibitors that specifically inhibit the PPP2R2D (PR55-delta) subunit of PP2A. Inactivation of PP2A during M phase is essential to keep cyclin-B1-CDK1 activity high. Following DNA damage, it is also involved in checkpoint recovery by being inhibited. In Mus musculus (Mouse), this protein is Serine/threonine-protein kinase greatwall (Mastl).